The chain runs to 293 residues: Pyridoxal 5'-phosphate synthase subunit PdxS (293 aa).

A D-ribose 5-phosphate-binding site is contributed by D25. Residue K82 is the Schiff-base intermediate with D-ribose 5-phosphate of the active site. Residue G154 coordinates D-ribose 5-phosphate. R166 is a binding site for D-glyceraldehyde 3-phosphate. D-ribose 5-phosphate-binding positions include G215 and 236–237 (GS).

It belongs to the PdxS/SNZ family. As to quaternary structure, in the presence of PdxT, forms a dodecamer of heterodimers.

The enzyme catalyses aldehydo-D-ribose 5-phosphate + D-glyceraldehyde 3-phosphate + L-glutamine = pyridoxal 5'-phosphate + L-glutamate + phosphate + 3 H2O + H(+). It functions in the pathway cofactor biosynthesis; pyridoxal 5'-phosphate biosynthesis. Its function is as follows. Catalyzes the formation of pyridoxal 5'-phosphate from ribose 5-phosphate (RBP), glyceraldehyde 3-phosphate (G3P) and ammonia. The ammonia is provided by the PdxT subunit. Can also use ribulose 5-phosphate and dihydroxyacetone phosphate as substrates, resulting from enzyme-catalyzed isomerization of RBP and G3P, respectively. The protein is Pyridoxal 5'-phosphate synthase subunit PdxS of Thermotoga petrophila (strain ATCC BAA-488 / DSM 13995 / JCM 10881 / RKU-1).